The chain runs to 316 residues: Ornithine carbamoyltransferase (316 aa).

Carbamoyl phosphate-binding positions include 59–62 (STRT), Gln-86, Arg-110, and 137–140 (HPCQ). Residues Asn-168, Asp-232, and 236–237 (SM) each bind L-ornithine. Carbamoyl phosphate contacts are provided by residues 273-274 (CL) and Arg-301.

It belongs to the aspartate/ornithine carbamoyltransferase superfamily. OTCase family.

It is found in the cytoplasm. The enzyme catalyses carbamoyl phosphate + L-ornithine = L-citrulline + phosphate + H(+). It functions in the pathway amino-acid biosynthesis; L-arginine biosynthesis; L-arginine from L-ornithine and carbamoyl phosphate: step 1/3. Reversibly catalyzes the transfer of the carbamoyl group from carbamoyl phosphate (CP) to the N(epsilon) atom of ornithine (ORN) to produce L-citrulline. The protein is Ornithine carbamoyltransferase of Listeria innocua serovar 6a (strain ATCC BAA-680 / CLIP 11262).